The following is a 488-amino-acid chain: Ribulose bisphosphate carboxylase large chain (488 aa).

Substrate-binding residues include N127 and T177. The Proton acceptor role is filled by K179. K181 is a binding site for substrate. The Mg(2+) site is built by K205, D207, and E208. K205 is modified (N6-carboxylysine). H297 serves as the catalytic Proton acceptor. Substrate-binding residues include R298, H330, and S382.

This sequence belongs to the RuBisCO large chain family. Type I subfamily. As to quaternary structure, heterohexadecamer of 8 large chains and 8 small chains. Mg(2+) serves as cofactor.

The protein localises to the plastid. The protein resides in the chloroplast. It carries out the reaction 2 (2R)-3-phosphoglycerate + 2 H(+) = D-ribulose 1,5-bisphosphate + CO2 + H2O. The catalysed reaction is D-ribulose 1,5-bisphosphate + O2 = 2-phosphoglycolate + (2R)-3-phosphoglycerate + 2 H(+). RuBisCO catalyzes two reactions: the carboxylation of D-ribulose 1,5-bisphosphate, the primary event in carbon dioxide fixation, as well as the oxidative fragmentation of the pentose substrate in the photorespiration process. Both reactions occur simultaneously and in competition at the same active site. In Pylaiella littoralis (Seaweed), this protein is Ribulose bisphosphate carboxylase large chain.